Reading from the N-terminus, the 283-residue chain is Bifunctional protein FolD (283 aa).

NADP(+) is bound by residues 164–166 (GRS), serine 189, and isoleucine 230.

This sequence belongs to the tetrahydrofolate dehydrogenase/cyclohydrolase family. As to quaternary structure, homodimer.

It catalyses the reaction (6R)-5,10-methylene-5,6,7,8-tetrahydrofolate + NADP(+) = (6R)-5,10-methenyltetrahydrofolate + NADPH. It carries out the reaction (6R)-5,10-methenyltetrahydrofolate + H2O = (6R)-10-formyltetrahydrofolate + H(+). Its pathway is one-carbon metabolism; tetrahydrofolate interconversion. Its function is as follows. Catalyzes the oxidation of 5,10-methylenetetrahydrofolate to 5,10-methenyltetrahydrofolate and then the hydrolysis of 5,10-methenyltetrahydrofolate to 10-formyltetrahydrofolate. This Pelobacter propionicus (strain DSM 2379 / NBRC 103807 / OttBd1) protein is Bifunctional protein FolD.